The following is a 158-amino-acid chain: Transcription elongation factor GreA (158 aa).

Residues 4–75 (EKTYPMTQEG…TQLENMIRNA (72 aa)) adopt a coiled-coil conformation.

Belongs to the GreA/GreB family.

Necessary for efficient RNA polymerase transcription elongation past template-encoded arresting sites. The arresting sites in DNA have the property of trapping a certain fraction of elongating RNA polymerases that pass through, resulting in locked ternary complexes. Cleavage of the nascent transcript by cleavage factors such as GreA or GreB allows the resumption of elongation from the new 3'terminus. GreA releases sequences of 2 to 3 nucleotides. The polypeptide is Transcription elongation factor GreA (Bacillus anthracis (strain A0248)).